A 321-amino-acid chain; its full sequence is Aspartate carbamoyltransferase catalytic subunit (321 aa).

The carbamoyl phosphate site is built by arginine 65 and threonine 66. L-aspartate is bound at residue lysine 93. Carbamoyl phosphate-binding residues include arginine 115, histidine 143, and glutamine 146. Residues arginine 176 and arginine 230 each contribute to the L-aspartate site. Carbamoyl phosphate-binding residues include glycine 271 and proline 272.

The protein belongs to the aspartate/ornithine carbamoyltransferase superfamily. ATCase family. Heterododecamer (2C3:3R2) of six catalytic PyrB chains organized as two trimers (C3), and six regulatory PyrI chains organized as three dimers (R2).

It carries out the reaction carbamoyl phosphate + L-aspartate = N-carbamoyl-L-aspartate + phosphate + H(+). It functions in the pathway pyrimidine metabolism; UMP biosynthesis via de novo pathway; (S)-dihydroorotate from bicarbonate: step 2/3. Functionally, catalyzes the condensation of carbamoyl phosphate and aspartate to form carbamoyl aspartate and inorganic phosphate, the committed step in the de novo pyrimidine nucleotide biosynthesis pathway. This chain is Aspartate carbamoyltransferase catalytic subunit, found in Bartonella bacilliformis (strain ATCC 35685 / KC583 / Herrer 020/F12,63).